The primary structure comprises 613 residues: Putative two-component response regulator ARR21 (613 aa).

One can recognise a Response regulatory domain in the interval 17–131; that stretch reads NVMVVDDDHV…DLTKIYQFAL (115 aa). Position 68 is a 4-aspartylphosphate (aspartate 68). The segment covering 178–195 has biased composition (polar residues); sequence KSDSRTVNSTNGSCVSTD. The tract at residues 178–223 is disordered; it reads KSDSRTVNSTNGSCVSTDGSRKNRKRKPNGGPSDDGESMSQPAKKK. A Nuclear localization signal motif is present at residues 221–224; sequence KKKK. The myb-like GARP DNA-binding region spans 224–274; it reads KIQWTDSLHDLFLQAIRHIGLDKAVPKKILAFMSVPYLTRENVASHLQKYR.

Belongs to the ARR family. Type-B subfamily. In terms of assembly, binds the target DNA as a monomer. In terms of processing, two-component system major event consists of a His-to-Asp phosphorelay between a sensor histidine kinase (HK) and a response regulator (RR). In plants, the His-to-Asp phosphorelay involves an additional intermediate named Histidine-containing phosphotransfer protein (HPt). This multistep phosphorelay consists of a His-Asp-His-Asp sequential transfer of a phosphate group between first a His and an Asp of the HK protein, followed by the transfer to a conserved His of the HPt protein and finally the transfer to an Asp in the receiver domain of the RR protein. Mainly expressed in siliques. Also found in germinating seedlings, stems, flowers and roots, but not in rosette leaves.

It localises to the nucleus. Its function is as follows. Putative transcriptional activator that binds specifically to the DNA sequence 5'-[AG]GATT-3'. Functions as a response regulator involved in His-to-Asp phosphorelay signal transduction system. Phosphorylation of the Asp residue in the receiver domain activates the ability of the protein to promote the transcription of target genes. Could directly activate some type-A response regulators in response to cytokinins. The chain is Putative two-component response regulator ARR21 (ARR21) from Arabidopsis thaliana (Mouse-ear cress).